The primary structure comprises 664 residues: Sodium/glucose cotransporter 1 (664 aa).

The Extracellular portion of the chain corresponds to Met-1–Arg-24. Residues Asn-25–Met-47 traverse the membrane as a helical segment. Topologically, residues Phe-48–Val-66 are cytoplasmic. Residues Trp-67–Thr-90 form a helical membrane-spanning segment. Residues Gly-91 to Gly-95 are Extracellular-facing. The helical transmembrane segment at Ile-96–Val-117 threads the bilayer. At Pro-118 to Gln-139 the chain is on the cytoplasmic side. A helical transmembrane segment spans residues Arg-140 to Ile-169. The Extracellular segment spans residues Asn-170–Asp-176. The helical transmembrane segment at Leu-177–Ile-193 threads the bilayer. Residues Thr-194–Tyr-202 are Cytoplasmic-facing. A helical transmembrane segment spans residues Thr-203–Phe-221. At Ala-222–Pro-275 the chain is on the extracellular side. An N-linked (GlcNAc...) asparagine glycan is attached at Asn-248. 5 cysteine pairs are disulfide-bonded: Cys-255–Cys-511, Cys-255–Cys-610, Cys-345–Cys-351, Cys-355–Cys-361, and Cys-517–Cys-522. Residues Trp-276 to Gln-295 form a helical membrane-spanning segment. At Val-296 to His-309 the chain is on the cytoplasmic side. A helical transmembrane segment spans residues Val-310 to Pro-331. Over Gly-332–Pro-375 the chain is Extracellular. Residues Asn-376–Thr-406 traverse the membrane as a helical segment. The Cytoplasmic segment spans residues Met-407 to Leu-422. Residues Met-423–Val-444 form a helical membrane-spanning segment. The Extracellular segment spans residues Gln-445–Gln-451. A helical transmembrane segment spans residues Leu-452 to Cys-477. Gln-457 contacts D-glucose. Topologically, residues Lys-478–Asn-481 are cytoplasmic. The helical transmembrane segment at Glu-482 to Phe-504 threads the bilayer. The Extracellular portion of the chain corresponds to Ala-505–His-525. Residues Tyr-526–Phe-547 traverse the membrane as a helical segment. Over Thr-548–Val-644 the chain is Cytoplasmic. A helical membrane pass occupies residues Val-645–Tyr-662. Topologically, residues Phe-663–Ala-664 are extracellular.

It belongs to the sodium:solute symporter (SSF) (TC 2.A.21) family. Post-translationally, N-glycosylation is not necessary for the cotransporter function.

The protein localises to the apical cell membrane. It carries out the reaction D-glucose(out) + 2 Na(+)(out) = D-glucose(in) + 2 Na(+)(in). The catalysed reaction is D-galactose(out) + 2 Na(+)(out) = D-galactose(in) + 2 Na(+)(in). Enhanced by the interaction with PDZK1IP1/MAP17; but unlike SLC5A2/SGLT2, PDZK1IP1 is not essential for SLC5A1 transporter activity. Possibly modulated by cholesterol binding. Functionally, electrogenic Na(+)-coupled sugar symporter that actively transports D-glucose or D-galactose at the plasma membrane, with a Na(+) to sugar coupling ratio of 2:1. Transporter activity is driven by a transmembrane Na(+) electrochemical gradient set by the Na(+)/K(+) pump. Has a primary role in the transport of dietary monosaccharides from enterocytes to blood. Responsible for the absorption of D-glucose or D-galactose across the apical brush-border membrane of enterocytes, whereas basolateral exit is provided by GLUT2. Additionally, functions as a D-glucose sensor in enteroendocrine cells, triggering the secretion of the incretins GCG and GIP that control food intake and energy homeostasis. Together with SGLT2, functions in reabsorption of D-glucose from glomerular filtrate, playing a nonredundant role in the S3 segment of the proximal tubules. Transports D-glucose into endometrial epithelial cells, controlling glycogen synthesis and nutritional support for the embryo as well as the decidual transformation of endometrium prior to conception. Acts as a water channel enabling passive water transport in response to the osmotic gradient created upon sugar and Na(+) uptake. Has high water conductivity comparable to aquaporins and therefore is expected to play an important role in transepithelial water permeability, especially in the small intestine. This Ovis aries (Sheep) protein is Sodium/glucose cotransporter 1 (SLC5A1).